The sequence spans 232 residues: 7-cyano-7-deazaguanine synthase 2 (232 aa).

9 to 19 (FSGGQDSTTCL) serves as a coordination point for ATP. Zn(2+)-binding residues include Cys189, Cys198, Cys201, and Cys204.

The protein belongs to the QueC family. Requires Zn(2+) as cofactor.

The enzyme catalyses 7-carboxy-7-deazaguanine + NH4(+) + ATP = 7-cyano-7-deazaguanine + ADP + phosphate + H2O + H(+). The protein operates within purine metabolism; 7-cyano-7-deazaguanine biosynthesis. In terms of biological role, catalyzes the ATP-dependent conversion of 7-carboxy-7-deazaguanine (CDG) to 7-cyano-7-deazaguanine (preQ(0)). The chain is 7-cyano-7-deazaguanine synthase 2 from Pseudomonas fluorescens (strain ATCC BAA-477 / NRRL B-23932 / Pf-5).